We begin with the raw amino-acid sequence, 284 residues long: 4-hydroxybenzoate octaprenyltransferase (284 aa).

8 helical membrane passes run 16 to 36 (PIGI…ASDG), 40 to 60 (WTLV…GCAV), 91 to 111 (LLVA…LNTL), 132 to 152 (FFAI…PMGF), 157 to 177 (NTVP…SVAY), 207 to 227 (AIIM…GWQF), 231 to 251 (IWFV…YTLI), and 259 to 279 (CFAA…GVAL).

This sequence belongs to the UbiA prenyltransferase family. Requires Mg(2+) as cofactor.

It localises to the cell inner membrane. The catalysed reaction is all-trans-octaprenyl diphosphate + 4-hydroxybenzoate = 4-hydroxy-3-(all-trans-octaprenyl)benzoate + diphosphate. It functions in the pathway cofactor biosynthesis; ubiquinone biosynthesis. Catalyzes the prenylation of para-hydroxybenzoate (PHB) with an all-trans polyprenyl group. Mediates the second step in the final reaction sequence of ubiquinone-8 (UQ-8) biosynthesis, which is the condensation of the polyisoprenoid side chain with PHB, generating the first membrane-bound Q intermediate 3-octaprenyl-4-hydroxybenzoate. This chain is 4-hydroxybenzoate octaprenyltransferase, found in Janthinobacterium sp. (strain Marseille) (Minibacterium massiliensis).